Reading from the N-terminus, the 85-residue chain is UPF0386 protein Meso_1721 (85 aa).

This sequence belongs to the UPF0386 family.

This is UPF0386 protein Meso_1721 from Chelativorans sp. (strain BNC1).